The sequence spans 49 residues: Large ribosomal subunit protein bL33C (49 aa).

It belongs to the bacterial ribosomal protein bL33 family.

In Lactococcus lactis subsp. cremoris (strain MG1363), this protein is Large ribosomal subunit protein bL33C.